The sequence spans 441 residues: Protein arginine methyltransferase NDUFAF7, mitochondrial (441 aa).

A mitochondrion-targeting transit peptide spans 1–46; sequence MSVLLRSGLGPLCAVARAAIPFIWRGKYFSSGNEPAENPVTPMLRH.

This sequence belongs to the NDUFAF7 family. As to quaternary structure, interacts with NDUFS2.

It localises to the mitochondrion. The catalysed reaction is L-arginyl-[protein] + 2 S-adenosyl-L-methionine = N(omega),N(omega)'-dimethyl-L-arginyl-[protein] + 2 S-adenosyl-L-homocysteine + 2 H(+). Arginine methyltransferase involved in the assembly or stability of mitochondrial NADH:ubiquinone oxidoreductase complex (complex I). Acts by mediating symmetric dimethylation of 'Arg-118' of NDUFS2 after it assembles into the complex I, stabilizing the early intermediate complex. The sequence is that of Protein arginine methyltransferase NDUFAF7, mitochondrial from Homo sapiens (Human).